Reading from the N-terminus, the 118-residue chain is Ribonuclease P protein component (118 aa).

It belongs to the RnpA family. In terms of assembly, consists of a catalytic RNA component (M1 or rnpB) and a protein subunit.

It catalyses the reaction Endonucleolytic cleavage of RNA, removing 5'-extranucleotides from tRNA precursor.. Functionally, RNaseP catalyzes the removal of the 5'-leader sequence from pre-tRNA to produce the mature 5'-terminus. It can also cleave other RNA substrates such as 4.5S RNA. The protein component plays an auxiliary but essential role in vivo by binding to the 5'-leader sequence and broadening the substrate specificity of the ribozyme. The sequence is that of Ribonuclease P protein component from Ureaplasma urealyticum serovar 10 (strain ATCC 33699 / Western).